Reading from the N-terminus, the 1202-residue chain is Liprin-alpha-1 (1202 aa).

Residues 1-33 (MMCEVMPTISEAEGPPGGGGGHGSGSPSQPDAD) form a disordered region. Gly residues predominate over residues 15 to 24 (PPGGGGGHGS). Positions 34 to 141 (SHFEQLMVSM…VSRHERSLRM (108 aa)) form a coiled coil. A Phosphoserine modification is found at Ser150. Residues 176–214 (EKVRERLRVALERCSLLEEELGATHKELMILKEQNNQKK) adopt a coiled-coil conformation. Disordered regions lie at residues 224–245 (NHEQ…SLSH) and 426–446 (KNQE…HNKR). Thr230 is subject to Phosphothreonine. 3 positions are modified to phosphoserine: Ser239, Ser242, and Ser244. Coiled coils occupy residues 249–521 (LAKV…GASL) and 623–669 (ADAH…SGSL). Position 448 is a phosphoserine (Ser448). Residues 651–662 (ENTEQRAEEIES) are compositionally biased toward basic and acidic residues. Residues 651–855 (ENTEQRAEEI…SKLGGQAEKN (205 aa)) are disordered. A phosphoserine mark is found at Ser666, Ser668, and Ser693. Positions 686 to 700 (ASSLASSSPPGSGRS) are enriched in low complexity. The span at 725 to 736 (SREEVRDDKTTI) shows a compositional bias: basic and acidic residues. Thr761 carries the post-translational modification Phosphothreonine. Over residues 762–771 (VSHEDIRDIR) the composition is skewed to basic and acidic residues. Ser763 bears the Phosphoserine mark. Positions 832-841 (VSETDNSSQD) are enriched in polar residues. The stretch at 847-871 (KLGGQAEKNRKLQKKHELLEEARRQ) forms a coiled coil. SAM domains follow at residues 878–944 (WDGP…IMSL), 963–1027 (NHEW…LRRL), and 1051–1120 (WSND…LLVM). Residues 1021–1050 (IMCLRRLNYDRKELERKREESQSEIKDVLV) adopt a coiled-coil conformation. At Ser1133 the chain carries Phosphoserine. Thr1159 carries the post-translational modification Phosphothreonine. Residues 1163 to 1202 (NFRVTSSMSSPSMQPKKMQMDGNVSGTQRLDSATVRTYSC) are disordered. Residues 1168–1179 (SSMSSPSMQPKK) are compositionally biased toward low complexity. The span at 1184 to 1202 (GNVSGTQRLDSATVRTYSC) shows a compositional bias: polar residues.

This sequence belongs to the liprin family. Liprin-alpha subfamily. Homodimer. Interacts with PTPRF (via D2 domain). Part of a cortical microtubule stabilization complex (CMSC) composed of KANK1, PPFIA1, PPFIBP1, ERC1/ELKS, PHLDB2/LL5beta, CLASPs, KIF21A and possibly additional interactors; within CMSCs KANK1 and PHLDB2/LL5beta seem to be the core components for recruiting microtubule-binding proteins KIF21A and CLASPs, whereas PPFIA1, PPFIBP1 and ERC1/ELKS serve as scaffolds for protein clustering. In terms of tissue distribution, ubiquitous.

It is found in the cytoplasm. Its subcellular location is the cell cortex. In terms of biological role, may regulate the disassembly of focal adhesions. May localize receptor-like tyrosine phosphatases type 2A at specific sites on the plasma membrane, possibly regulating their interaction with the extracellular environment and their association with substrates. This Homo sapiens (Human) protein is Liprin-alpha-1 (PPFIA1).